Consider the following 225-residue polypeptide: Ribose-5-phosphate isomerase A (225 aa).

Substrate is bound by residues 33–36 (TGST), 84–87 (DGAD), and 96–99 (KGGG). Glutamate 105 (proton acceptor) is an active-site residue. Substrate is bound at residue lysine 123.

The protein belongs to the ribose 5-phosphate isomerase family. Homodimer.

It catalyses the reaction aldehydo-D-ribose 5-phosphate = D-ribulose 5-phosphate. It functions in the pathway carbohydrate degradation; pentose phosphate pathway; D-ribose 5-phosphate from D-ribulose 5-phosphate (non-oxidative stage): step 1/1. Its function is as follows. Catalyzes the reversible conversion of ribose-5-phosphate to ribulose 5-phosphate. This chain is Ribose-5-phosphate isomerase A, found in Halobacterium salinarum (strain ATCC 29341 / DSM 671 / R1).